We begin with the raw amino-acid sequence, 449 residues long: MAGRSWLIDSNRIATKIMSASASSDPRQVVWKSNPSRHCPKCQHVIDNSDVVDDWPGLPRGVKFDPSDPEIIWHLLAKSGLSGLSSHPFIDEFIPTVNQDDGICYTHPKNLPGVKSDGTVSHFFHKAIKAYSTGTRKRRKIHDDDFGDVRWHKTGRTKPVVLDGVQRGCKKIMVLYGGKAVKTNWVMHQYHLGIEEDEKEGDYVVSKIFYQQPQQLVVKRGDKAEQEVSEDIFAAVTPTADPVTPKLATPEPRNAVRICSDSHIASDYVTPSDYVSAHEVSLAETSEVMCMEDEVQSIQPNHERPSSGPELEHGLENGAKEMLDDKEEQEKDRDNENQGEEDPTWFDSGSQFILNSQQLVEALSLCDDLLGSQDREENTNSGSLKDKQPCIADYAHLGPEDFKRDLEECQKIVLDPSNIELDTPPEFRLSQLEFGSQDSFLAWGTGKTD.

Residues 58–211 enclose the NAC domain; the sequence is LPRGVKFDPS…DYVVSKIFYQ (154 aa). A DNA-binding region spans residues 167-217; sequence RGCKKIMVLYGGKAVKTNWVMHQYHLGIEEDEKEGDYVVSKIFYQQPQQLV. Residues 324–336 are compositionally biased toward basic and acidic residues; that stretch reads DDKEEQEKDRDNE. The disordered stretch occupies residues 324–348; the sequence is DDKEEQEKDRDNENQGEEDPTWFDS.

Phosphorylated in a DNA stress-independent manner. Hyperphosphorylated on SQ motifs upon double-strand breaks, H(2)O(2) or zeocin treatments. Hyperphosphorylation is required for SOG1 function, and unlike constitutive phosphorylation, is ATM dependent. In terms of tissue distribution, expressed in shoot and root apical meristems, in lateral root primordia, in the vasculature of young leaves and in the root stele.

The protein resides in the nucleus. Transcription factor regulating the transcriptional activation response to gamma irradiation. Required for stem-cell death induced by UVB or by gamma irradiation. Not required for ATM activation, but participates in pathways governed by both ATM and ATR sensor kinases. Involved in DNA damage response (DDR) system that regulates cell cycle arrest. Functional homolog of animal p53. Regulates SMR5 and SMR7 transcription. Regulates DNA repair and cytokinin signaling separately and plays a key role in controlling lateral root formation under genotoxic stress. The chain is SUPPRESSOR OF GAMMA RESPONSE 1 from Arabidopsis thaliana (Mouse-ear cress).